The sequence spans 734 residues: Photosystem I P700 chlorophyll a apoprotein A2 (734 aa).

8 consecutive transmembrane segments (helical) span residues 46–69, 135–158, 175–199, 273–291, 330–353, 369–395, 417–439, and 517–535; these read IFAS…FHVA, LYTG…LHLQ, LNHH…HVAI, MAHH…GHMY, IHFQ…QHMY, AALY…IFFI, AIIS…LYVH, and FLVH…LILV. Positions 559 and 568 each coordinate [4Fe-4S] cluster. 2 helical membrane passes run 575–596 and 643–665; these read AFYL…YWHW and LSVW…MFLI. Chlorophyll a is bound by residues H654, M662, and Y670. W671 lines the phylloquinone pocket. Residues 707–727 form a helical membrane-spanning segment; the sequence is LVGLAHFSVGYIFTYAAFLIA.

Belongs to the PsaA/PsaB family. The PsaA/B heterodimer binds the P700 chlorophyll special pair and subsequent electron acceptors. PSI consists of a core antenna complex that captures photons, and an electron transfer chain that converts photonic excitation into a charge separation. The eukaryotic PSI reaction center is composed of at least 11 subunits. The cofactor is P700 is a chlorophyll a/chlorophyll a' dimer, A0 is one or more chlorophyll a, A1 is one or both phylloquinones and FX is a shared 4Fe-4S iron-sulfur center..

It localises to the plastid. It is found in the chloroplast thylakoid membrane. It catalyses the reaction reduced [plastocyanin] + hnu + oxidized [2Fe-2S]-[ferredoxin] = oxidized [plastocyanin] + reduced [2Fe-2S]-[ferredoxin]. Its function is as follows. PsaA and PsaB bind P700, the primary electron donor of photosystem I (PSI), as well as the electron acceptors A0, A1 and FX. PSI is a plastocyanin-ferredoxin oxidoreductase, converting photonic excitation into a charge separation, which transfers an electron from the donor P700 chlorophyll pair to the spectroscopically characterized acceptors A0, A1, FX, FA and FB in turn. Oxidized P700 is reduced on the lumenal side of the thylakoid membrane by plastocyanin. This chain is Photosystem I P700 chlorophyll a apoprotein A2, found in Crucihimalaya wallichii (Rock-cress).